Consider the following 196-residue polypeptide: Potassium-transporting ATPase KdpC subunit (196 aa).

A helical membrane pass occupies residues 7–27 (PALVLFFVLTLLTGVAYPLAV).

This sequence belongs to the KdpC family. In terms of assembly, the system is composed of three essential subunits: KdpA, KdpB and KdpC.

It is found in the cell inner membrane. Part of the high-affinity ATP-driven potassium transport (or Kdp) system, which catalyzes the hydrolysis of ATP coupled with the electrogenic transport of potassium into the cytoplasm. This subunit acts as a catalytic chaperone that increases the ATP-binding affinity of the ATP-hydrolyzing subunit KdpB by the formation of a transient KdpB/KdpC/ATP ternary complex. The protein is Potassium-transporting ATPase KdpC subunit of Polaromonas naphthalenivorans (strain CJ2).